Consider the following 545-residue polypeptide: Chaperonin GroEL (545 aa).

ATP is bound by residues 30–33 (TLGP), Lys-51, 87–91 (DGTTT), Gly-415, and Asp-495.

This sequence belongs to the chaperonin (HSP60) family. As to quaternary structure, forms a cylinder of 14 subunits composed of two heptameric rings stacked back-to-back. Interacts with the co-chaperonin GroES.

The protein resides in the cytoplasm. It carries out the reaction ATP + H2O + a folded polypeptide = ADP + phosphate + an unfolded polypeptide.. In terms of biological role, together with its co-chaperonin GroES, plays an essential role in assisting protein folding. The GroEL-GroES system forms a nano-cage that allows encapsulation of the non-native substrate proteins and provides a physical environment optimized to promote and accelerate protein folding. The protein is Chaperonin GroEL of Shewanella sp. (strain W3-18-1).